Consider the following 434-residue polypeptide: Serine hydroxymethyltransferase (434 aa).

Residues L133 and 137–139 (GHL) each bind (6S)-5,6,7,8-tetrahydrofolate. N6-(pyridoxal phosphate)lysine is present on K242.

This sequence belongs to the SHMT family. As to quaternary structure, homodimer. Requires pyridoxal 5'-phosphate as cofactor.

The protein localises to the cytoplasm. The enzyme catalyses (6R)-5,10-methylene-5,6,7,8-tetrahydrofolate + glycine + H2O = (6S)-5,6,7,8-tetrahydrofolate + L-serine. It functions in the pathway one-carbon metabolism; tetrahydrofolate interconversion. It participates in amino-acid biosynthesis; glycine biosynthesis; glycine from L-serine: step 1/1. Its function is as follows. Catalyzes the reversible interconversion of serine and glycine with tetrahydrofolate (THF) serving as the one-carbon carrier. This reaction serves as the major source of one-carbon groups required for the biosynthesis of purines, thymidylate, methionine, and other important biomolecules. Also exhibits THF-independent aldolase activity toward beta-hydroxyamino acids, producing glycine and aldehydes, via a retro-aldol mechanism. The sequence is that of Serine hydroxymethyltransferase from Methylobacterium radiotolerans (strain ATCC 27329 / DSM 1819 / JCM 2831 / NBRC 15690 / NCIMB 10815 / 0-1).